Here is a 369-residue protein sequence, read N- to C-terminus: MGNVCVGGSRMSHQVYSPDRADTPPRSERNTPDRRQRAAGDAERTQSMRLQQKINDLKPYVRHARGPIKAYGQAALDRASGKKTSVSFAELDATHLDAMVYIENQRNPGLNLKHFRDHKELIQALQSDGPSAFRAIFPQTCPETGQTLKHHVMADVRLHQGGAPTIIITEPAVIVGARYQQLQRHNLTLEDLSESGVPLSQVAIIETQAQKTSDDCVMYSLNYAIKAHKNAAQFDDIHHGLQHGTLSTESESRARTTLGALEASSSYSVMHEGAHAAFGADVLPVDFYKHGASLTQAKQLMKRPDGRMAGRVNSEGHSEAENLVQRNQAFRVKRRELLDDETPSNTQFSASIDGFRLQEIKRVLAEEQR.

A disordered region spans residues 1 to 46; sequence MGNVCVGGSRMSHQVYSPDRADTPPRSERNTPDRRQRAAGDAERTQ. Residues 19–46 are compositionally biased toward basic and acidic residues; that stretch reads DRADTPPRSERNTPDRRQRAAGDAERTQ. 3 residues coordinate 1D-myo-inositol hexakisphosphate: R49, K53, and R106. Catalysis depends on residues H150 and E170. H150 contacts CoA. CoA-binding positions include A177 and 211-212; that span reads KT. C216 is an active-site residue. Residues N222, 226-229, and 289-290 each bind 1D-myo-inositol hexakisphosphate; these read KAHK and KH. K289 bears the N6-acetyllysine; by autocatalysis mark. 292 to 295 contacts CoA; sequence ASLT. 1D-myo-inositol hexakisphosphate-binding positions include 314–317 and R326; that span reads SEGH. Residues 331 to 334 and 344 to 348 contribute to the CoA site; these read RVKR and SNTQF. Residues Q358 and R362 each contribute to the 1D-myo-inositol hexakisphosphate site.

The protein belongs to the acetyltransferase YopJ family. In terms of assembly, interacts with host plant JAZ proteins (e.g. Glycine max JAZ1 and Arabidospis thaliana TIFY10B/JAZ2, TIFY11A/JAZ5, TIFY11B/JAZ6, TIFY5A/JAZ8 and TIFY3B/JAZ12) and triggers their degradation. Binds directly to SZE1 and SZE2 at the host plasma membrane; this interaction with a complex made of, at least, SZE1, BKN2/SZE2, ZAR1 and ZED1 triggers host immunity. The cofactor is 1D-myo-inositol hexakisphosphate. Autoacetylated at Lys-289; while autoacetylation at Lys-289 is required for virulence function to some extent, it is not essential.

The protein localises to the secreted. It localises to the host cell membrane. Its subcellular location is the host cytoplasm. The protein resides in the host cytoskeleton. It is found in the host nucleus. The enzyme catalyses L-threonyl-[protein] + acetyl-CoA = O-acetyl-L-threonyl-[protein] + CoA. It catalyses the reaction L-seryl-[protein] + acetyl-CoA = O-acetyl-L-seryl-[protein] + CoA. It carries out the reaction L-lysyl-[protein] + acetyl-CoA = N(6)-acetyl-L-lysyl-[protein] + CoA + H(+). With respect to regulation, 1D-myo-inositol hexakisphosphate activates protein-acetyltransferase activity via an allosteric mechanism: 1D-myo-inositol hexakisphosphate-binding induces a conformational rearrangement that stimulates the interaction with acetyl-CoA. Acetyltransferase activity is activated by phytic acid. In terms of biological role, serine/threonine-protein acetyltransferase translocated into infected cells, which impairs host microtubule network and host immunity by mediating acetylation of target proteins. Blocks secretion in host cells by mediating acetylation of host tubulin, thereby impairing host microbubule network. Impairs host cell immunity by mediating acetylation of host TIFY/JAZ transcription repressors (Arabidopsis thaliana TIFY10B/JAZ2, TIFY11A/JAZ5, TIFY11B/JAZ6, TIFY5A/JAZ8, TIFY9/JAZ10 and TIFY3B/JAZ12), thereby activating host jasmonate signaling. This is Serine/threonine-protein acetyltransferase HopZ1a from Pseudomonas syringae pv. syringae.